A 468-amino-acid chain; its full sequence is tRNA threonylcarbamoyladenosine dehydratase (468 aa).

Transmembrane regions (helical) follow at residues 15-35, 109-129, and 315-335; these read FWIA…TLEF, NSFV…NMLA, and ILPV…TYVL.

It belongs to the HesA/MoeB/ThiF family.

Its subcellular location is the mitochondrion outer membrane. In terms of biological role, catalyzes the ATP-dependent dehydration of threonylcarbamoyladenosine at position 37 (t(6)A37) to form cyclic t(6)A37 (ct(6)A37) in tRNAs that read codons beginning with adenine. The sequence is that of tRNA threonylcarbamoyladenosine dehydratase (tcd1) from Schizosaccharomyces pombe (strain 972 / ATCC 24843) (Fission yeast).